The primary structure comprises 113 residues: Pro-FMRFamide-related neuropeptide FF (113 aa).

The first 20 residues, 1-20, serve as a signal peptide directing secretion; that stretch reads MDSRQAAALLVLLLLIDGGC. The propeptide occupies 21–65; it reads AEGPGGQQEDQLSAEEDSEPLPPQDAQTSGSLLHYLLQAMERPGR. The tract at residues 22–48 is disordered; the sequence is EGPGGQQEDQLSAEEDSEPLPPQDAQT. F76 bears the Phenylalanine amide mark. Positions 79-92 are excised as a propeptide; sequence NTQGSWRNEWLSPR. Phenylalanine amide is present on F110.

The protein belongs to the FARP (FMRFamide related peptide) family.

It is found in the secreted. Its function is as follows. Morphine modulating peptides. Have wide-ranging physiologic effects, including the modulation of morphine-induced analgesia, elevation of arterial blood pressure, and increased somatostatin secretion from the pancreas. Neuropeptide FF potentiates and sensitizes ASIC1 and ASIC3 channels. This is Pro-FMRFamide-related neuropeptide FF from Homo sapiens (Human).